The sequence spans 318 residues: MFMINLLMMIVPILLAVAFLTLVERKVLGYMQLRKGPNVVGPYGLLQPIADAIKLFTKEPLRPLTSSISMFIMAPILALTLALTMWTPLPMPYPLINMNLGILFMLAMSSLAVYSILWSGWASNSKYALIGALRAVAQTISYEVTLAIILLSVLLLSGSFTLPTLITTQEHIWLIVPSWPLAMMWFISTLAETNRAPFDLTEGESELVSGFNVEYAGGPFALFFLAEYANIIMMNIFTTILFLGAFHNPLMPELYTINFVTKSMLLTISFLWVRASYPRFRYDQLMHLLWKNFLPLTLALCMWHVTMPIITAGVPPLT.

8 helical membrane-spanning segments follow: residues 2-22 (FMIN…FLTL), 68-88 (ISMF…MWTP), 100-120 (LGIL…LWSG), 146-166 (LAII…PTLI), 171-191 (HIWL…STLA), 222-242 (LFFL…TILF), 253-273 (ELYT…FLWV), and 293-313 (FLPL…ITAG).

This sequence belongs to the complex I subunit 1 family. As to quaternary structure, core subunit of respiratory chain NADH dehydrogenase (Complex I) which is composed of 45 different subunits.

It localises to the mitochondrion inner membrane. It catalyses the reaction a ubiquinone + NADH + 5 H(+)(in) = a ubiquinol + NAD(+) + 4 H(+)(out). Its function is as follows. Core subunit of the mitochondrial membrane respiratory chain NADH dehydrogenase (Complex I) which catalyzes electron transfer from NADH through the respiratory chain, using ubiquinone as an electron acceptor. Essential for the catalytic activity and assembly of complex I. The polypeptide is NADH-ubiquinone oxidoreductase chain 1 (MT-ND1) (Hipposideros armiger terasensis (Formosan leaf-nosed bat)).